Here is a 250-residue protein sequence, read N- to C-terminus: Kallikrein-14 (250 aa).

Residues 1–18 (MFLLLIILQALAVAIAQS) form the signal peptide. A propeptide spans 19 to 23 (QGDHK) (activation peptide). In terms of domain architecture, Peptidase S1 spans 24-248 (IIGGYRCVRN…YHSWIQRTMQ (225 aa)). The cysteines at positions 51 and 67 are disulfide-linked. Catalysis depends on charge relay system residues H66 and D110. Disulfide bonds link C142/C209, C174/C188, and C199/C224. S203 (charge relay system) is an active-site residue.

The protein belongs to the peptidase S1 family. Kallikrein subfamily. Post-translationally, proteolytic cleavage of the activation peptide produces the active enzyme.

It is found in the secreted. It localises to the extracellular space. With respect to regulation, inhibited by SERPINA1, SERPINC1, SERPINE1, SERPINF2, aprotinin, soybean, trypsin inhibitor and leupeptin. Inhibited by serine protease inhibitor SPINK5. Has an autoproteolytic activity which may have a regulatory effect. Activated by citrate and inhibited by zinc and to a lower extent by manganese. In terms of biological role, serine-type endopeptidase with a dual trypsin-like and chymotrypsin-like substrate specificity. May activate/inactivate the proteinase-activated receptors F2R, F2RL1 and F2RL3 and other kallikreins including KLK1, KLK3, KLK5 and KLK11. May function in seminal clot liquefaction through direct cleavage of the semenogelin SEMG1 and SEMG2 and activation of KLK3. May function through desmoglein DSG1 cleavage in epidermal desquamation a process by which the most superficial corneocytes are shed from the skin surface. May be involved in several aspects of tumor progression including growth, invasion and angiogenesis. In Mus musculus (Mouse), this protein is Kallikrein-14 (Klk14).